The sequence spans 270 residues: uncharacterized protein (270 aa).

Residues 1 to 23 form the signal peptide; that stretch reads MFNFITFILFAVVCISYCHKSRG. N-linked (GlcNAc...) asparagine glycosylation is found at Asn246 and Asn252.

Its subcellular location is the secreted. This is an uncharacterized protein from Caenorhabditis elegans.